We begin with the raw amino-acid sequence, 380 residues long: Apelin receptor (380 aa).

The Extracellular segment spans residues 1-30; that stretch reads MEEGGDFDNYYGADNQSECEYTDWKSSGAL. A glycan (N-linked (GlcNAc...) asparagine) is linked at N15. 2 disulfide bridges follow: C19–C281 and C102–C181. A helical membrane pass occupies residues 31 to 54; sequence IPAIYMLVFLLGTTGNGLVLWTVF. Over 55–64 the chain is Cytoplasmic; that stretch reads RSSREKRRSA. The chain crosses the membrane as a helical span at residues 65 to 86; the sequence is DIFIASLAVADLTFVVTLPLWA. Residues 87 to 99 are Extracellular-facing; sequence TYTYRDYDWPFGT. The helical transmembrane segment at 100-125 threads the bilayer; sequence FSCKLSSYLIFVNMYASVFCLTGLSF. The Cytoplasmic portion of the chain corresponds to 126–146; it reads DRYLAIVRPVANARLRLRVSG. A helical membrane pass occupies residues 147 to 164; sequence AVATAVLWVLAALLAMPV. Topologically, residues 165-198 are extracellular; it reads MVFRTTGDLENTTKVQCYMDYSMVATVSSDWAWE. A glycan (N-linked (GlcNAc...) asparagine) is linked at N175. A helical transmembrane segment spans residues 199-223; that stretch reads VGLGVSSTTVGFVVPFTIMLTCYFF. Over 224–246 the chain is Cytoplasmic; it reads IAQTIAGHFRKERIEGLRKRRRL. The helical transmembrane segment at 247–270 threads the bilayer; sequence LSIIVVLVVTFALCWMPYHLVKTL. At 271–289 the chain is on the extracellular side; sequence YMLGSLLHWPCDFDLFLMN. A helical transmembrane segment spans residues 290-312; the sequence is VFPYCTCISYVNSCLNPFLYAFF. Topologically, residues 313-380 are cytoplasmic; the sequence is DPRFRQACTS…PYSQETLVVD (68 aa). Over residues 342–351 the composition is skewed to low complexity; it reads KSASYSSGHS. Residues 342-380 form a disordered region; the sequence is KSASYSSGHSQGPGPNMGKGGEQMHEKSIPYSQETLVVD. Polar residues predominate over residues 371–380; it reads PYSQETLVVD.

The protein belongs to the G-protein coupled receptor 1 family. As to quaternary structure, homodimer; dimerization inhibits APLNR-mediated G protein and beta-arrestin signaling pathways compared to monomeric APLNR.

It is found in the cell membrane. G protein-coupled receptor for peptide hormones apelin (APLN) and apelin receptor early endogenous ligand (APELA/ELA), that plays a role in the regulation of normal cardiovascular function and fluid homeostasis. When acting as apelin receptor, activates both G(i) protein pathway that inhibits adenylate cyclase activity, and the beta-arrestin pathway that promotes internalization of the receptor. APLNR/APJ also functions as mechanoreceptor that is activated by pathological stimuli in a G-protein-independent fashion to induce beta-arrestin signaling, hence eliciting cardiac hypertrophy. However, the presence of apelin ligand blunts cardiac hypertrophic induction from APLNR/APJ on response to pathological stimuli. Plays a key role in early development such as gastrulation, blood vessels formation and heart morphogenesis by acting as a APELA receptor. May promote angioblast migration toward the embryonic midline, i.e. the position of the future vessel formation, during vasculogenesis. Promotes sinus venosus (SV)-derived endothelial cells migration into the developing heart to promote coronary blood vessel development. Also plays a role in various processes in adults such as regulation of blood vessel formation, blood pressure, heart contractility and heart failure. In terms of biological role, (Microbial infection) Alternative coreceptor with CD4 for HIV-1 infection; may be involved in the development of AIDS dementia. The protein is Apelin receptor (APLNR) of Macaca mulatta (Rhesus macaque).